The sequence spans 147 residues: Hemoglobin subunit beta (147 aa).

Val-2 bears the N-acetylvaline mark. Residues 3–147 (HLTGEEKAAV…VANALAHKYH (145 aa)) form the Globin domain. Position 13 is a phosphothreonine (Thr-13). At Ser-45 the chain carries Phosphoserine. At Lys-60 the chain carries N6-acetyllysine. His-64 contacts heme b. Lys-83 carries the post-translational modification N6-acetyllysine. Residue His-93 coordinates heme b. The residue at position 94 (Cys-94) is an S-nitrosocysteine. The residue at position 145 (Lys-145) is an N6-acetyllysine.

The protein belongs to the globin family. As to quaternary structure, heterotetramer of two alpha chains and two beta chains. Red blood cells.

Involved in oxygen transport from the lung to the various peripheral tissues. The chain is Hemoglobin subunit beta (HBB) from Aotus azarae (Azara's night monkey).